The sequence spans 210 residues: Transcriptional regulator GfcR (210 aa).

The interval V39–I60 is disordered. The segment covering P48–I60 has biased composition (basic and acidic residues).

This sequence belongs to the purine/pyrimidine phosphoribosyltransferase family. GfcR subfamily.

With respect to regulation, interaction with effectors modulates GfcR activity. 2-keto-3-deoxy-6-phosphogluconate (KDPG), fructose-1,6-bisphosphate (FBP), 2-keto-3-deoxy-6-phosphogalactonate (KDPGal) and glycerol-3-phosphate (G3P), which are intermediates of sugar and glycerol degradation pathways, can act as inducer molecules. DNA-binding transcriptional regulator that functions as a regulator of central sugar catabolic pathways. Is both a local regulator of specific steps in the pathways for D-glucose and D-fructose degradation and a global regulator of hexose catabolism. In the presence of D-glucose, activates expression of the gene encoding the gluconate dehydratase (gad), which is involved in D-glucose catabolism via the semiphosphorylative Entner-Doudoroff (spED) pathway. In the presence of D-fructose, activates expression of the genes encoding the PTS system EIIC component (ptfC) and the fructose-1,6-bisphosphate aldolase (fba), which are involved in D-fructose uptake and degradation via the modified Embden-Meyerhof pathway. In addition, in the presence of D-glucose, D-fructose, D-galactose or glycerol, it activates expression of the genes encoding glyceraldehyde-3-phosphate dehydrogenase (gap) and pyruvate kinase (pykA), enzymes common to all four degradation pathways. Acts by binding directly to the promoter region of the regulated genes. The sequence is that of Transcriptional regulator GfcR from Haloferax volcanii (strain ATCC 29605 / DSM 3757 / JCM 8879 / NBRC 14742 / NCIMB 2012 / VKM B-1768 / DS2) (Halobacterium volcanii).